The primary structure comprises 106 residues: NADH dehydrogenase [ubiquinone] iron-sulfur protein 5 (106 aa).

One can recognise a CHCH domain in the interval P30–K74. 2 consecutive short sequence motifs (cx9C motif) follow at residues C33–C43 and C56–C66. Disulfide bonds link C33–C66 and C43–C56. Residues E84–S106 are disordered.

Belongs to the complex I NDUFS5 subunit family. As to quaternary structure, mammalian complex I is composed of 45 different subunits. This is a component of the iron-sulfur (IP) fragment of the enzyme.

It localises to the mitochondrion inner membrane. Its subcellular location is the mitochondrion intermembrane space. Accessory subunit of the mitochondrial membrane respiratory chain NADH dehydrogenase (Complex I), that is believed not to be involved in catalysis. Complex I functions in the transfer of electrons from NADH to the respiratory chain. The immediate electron acceptor for the enzyme is believed to be ubiquinone. This Bos taurus (Bovine) protein is NADH dehydrogenase [ubiquinone] iron-sulfur protein 5 (NDUFS5).